The chain runs to 274 residues: Sulfur carrier protein FdhD (274 aa).

Residue cysteine 121 is the Cysteine persulfide intermediate of the active site. Mo-bis(molybdopterin guanine dinucleotide) is bound at residue 258–263 (FSKPGR).

The protein belongs to the FdhD family.

The protein resides in the cytoplasm. In terms of biological role, required for formate dehydrogenase (FDH) activity. Acts as a sulfur carrier protein that transfers sulfur from IscS to the molybdenum cofactor prior to its insertion into FDH. In Yersinia pestis bv. Antiqua (strain Antiqua), this protein is Sulfur carrier protein FdhD.